Here is a 553-residue protein sequence, read N- to C-terminus: Solute carrier family 22 member 12 (553 aa).

The chain crosses the membrane as a helical span at residues 16–36 (FQLLQAVALVTPILWVTTQNM). N-linked (GlcNAc...) asparagine glycosylation is found at N56, N102, and N107. The next 11 helical transmembrane spans lie at 146-166 (PMAQ…CGHA), 182-202 (LVSV…YCLF), 204-224 (FLVA…LMEW), 232-252 (LMMT…GSVA), 260-280 (MLQL…WWLP), 351-371 (FISM…ALDL), 378-398 (IFLL…GSLL), 407-427 (LCQA…ILVP), 435-455 (SSLA…VTIF), 466-486 (MTAV…GPLV), and 495-515 (WLPL…ALLL). S534 bears the Phosphoserine mark.

This sequence belongs to the major facilitator (TC 2.A.1) superfamily. Organic cation transporter (TC 2.A.1.19) family. In terms of assembly, interacts with PDZK1. N-glycosylated. Expressed in the proximal tubular epithelial cells in kidney.

It is found in the apical cell membrane. It catalyses the reaction urate(out) + (S)-lactate(in) = urate(in) + (S)-lactate(out). The catalysed reaction is nicotinate(in) + urate(out) = nicotinate(out) + urate(in). The enzyme catalyses urate(out) + n chloride(in) = urate(in) + n chloride(out). It carries out the reaction orotate(out) + nicotinate(in) = orotate(in) + nicotinate(out). Functionally, electroneutral antiporter that translocates urate across the apical membrane of proximal tubular cells in exchange for monovalent organic or inorganic anions. Involved in renal reabsorption of urate and helps maintaining blood levels of uric acid. Mediates urate uptake by an exchange with organic anions such as (S)-lactate and nicotinate, and inorganic anion Cl(-). Other inorganic anions such as Br(-), I(-) and NO3(-) may also act as counteranions that exchange for urate. Also mediates orotate tubular uptake coupled with nicotinate efflux and to a lesser extent with lactate efflux, therefore displaying a potential role in orotate renal reabsorption. Orotate transport is Cl(-)-dependent. The sequence is that of Solute carrier family 22 member 12 (Slc22a12) from Rattus norvegicus (Rat).